The following is a 251-amino-acid chain: Isopentenyl-diphosphate delta-isomerase (251 aa).

Lysine 49 is a substrate binding site. Histidine 53 and histidine 66 together coordinate Mg(2+). A Nudix hydrolase domain is found at leucine 64–leucine 212. The substrate site is built by arginine 86 and lysine 90. Cysteine 102 is a catalytic residue. Serine 103 lines the substrate pocket. 2 residues coordinate Mg(2+): glutamate 162 and glutamate 164. Glutamate 164 is an active-site residue.

The protein belongs to the IPP isomerase type 1 family. Mg(2+) serves as cofactor.

It is found in the cytoplasm. It carries out the reaction isopentenyl diphosphate = dimethylallyl diphosphate. It participates in isoprenoid biosynthesis; dimethylallyl diphosphate biosynthesis; dimethylallyl diphosphate from isopentenyl diphosphate: step 1/1. Isopentenyl-diphosphate delta-isomerase; part of the second module of ergosterol biosynthesis pathway that includes the middle steps of the pathway. The second module is carried out in the vacuole and involves the formation of farnesyl diphosphate, which is also an important intermediate in the biosynthesis of ubiquinone, dolichol, heme and prenylated proteins. Activity by the mevalonate kinase first converts mevalonate into 5-phosphomevalonate. 5-phosphomevalonate is then further converted to 5-diphosphomevalonate by the phosphomevalonate kinase. The diphosphomevalonate decarboxylase then produces isopentenyl diphosphate. The isopentenyl-diphosphate delta-isomerase then catalyzes the 1,3-allylic rearrangement of the homoallylic substrate isopentenyl (IPP) to its highly electrophilic allylic isomer, dimethylallyl diphosphate (DMAPP). Finally the farnesyl diphosphate synthase catalyzes the sequential condensation of isopentenyl pyrophosphate with dimethylallyl pyrophosphate, and then with the resultant geranylpyrophosphate to the ultimate product farnesyl pyrophosphate. This Phaffia rhodozyma (Yeast) protein is Isopentenyl-diphosphate delta-isomerase.